Reading from the N-terminus, the 334-residue chain is MGSIGSMGKPIEGFLVAAIQFPVPIVNSRKDIDHNIESIIRTLHATKAGYPGVELIIFPEYSTQGLNTAKWLSEEFLLDVPGKETELYAKACKEAKVYGVFSIMERNPDSNKNPYNTAIIIDPQGKIILKYRKLFPWNPIEPWYPGDLGMPVCEGPGGSKLAVCICHDGMIPELAREAAYKGCNVYIRISGYSTQVNDQWILTNRSNAWHNLMYTVSVNLAGYDNVFYYFGEGQICNFDGTTLVQGHRNPWEIVTGEIYPKMADNARLSWGLENNIYNLGHRGYVAKPGGEHDAGLTYIKDLAAGKYKLPWEDHMKIKDGSIYGYPTTGGRFGK.

Residues 14-260 (FLVAAIQFPV…WEIVTGEIYP (247 aa)) enclose the CN hydrolase domain. The active-site Proton acceptor is E60. The active-site Proton donor is K133. C166 (nucleophile) is an active-site residue.

The protein belongs to the carbon-nitrogen hydrolase superfamily. Aliphatic amidase family.

The catalysed reaction is formamide + H2O = formate + NH4(+). In terms of biological role, is an aliphatic amidase with a restricted substrate specificity, as it only hydrolyzes formamide. The polypeptide is Formamidase (Helicobacter pylori (strain G27)).